The following is a 358-amino-acid chain: tRNA pseudouridine synthase B (358 aa).

Positions 1 to 50 (MTTPDAAIDSKISDSNGADKNKSAADDNAFNAPGRKRHHNNQPRRDKRDV) are disordered. Aspartate 87 (nucleophile) is an active-site residue.

The protein belongs to the pseudouridine synthase TruB family. Type 1 subfamily.

It catalyses the reaction uridine(55) in tRNA = pseudouridine(55) in tRNA. Its function is as follows. Responsible for synthesis of pseudouridine from uracil-55 in the psi GC loop of transfer RNAs. This chain is tRNA pseudouridine synthase B, found in Nitrobacter winogradskyi (strain ATCC 25391 / DSM 10237 / CIP 104748 / NCIMB 11846 / Nb-255).